We begin with the raw amino-acid sequence, 60 residues long: Large ribosomal subunit protein bL33 (60 aa).

This sequence belongs to the bacterial ribosomal protein bL33 family.

The sequence is that of Large ribosomal subunit protein bL33 from Christiangramia forsetii (strain DSM 17595 / CGMCC 1.15422 / KT0803) (Gramella forsetii).